A 353-amino-acid chain; its full sequence is Basic membrane protein C (353 aa).

The N-terminal stretch at 1 to 16 (MFKRFIFITLSLLVFA) is a signal peptide. The N-palmitoyl cysteine moiety is linked to residue Cys-17. Cys-17 carries the S-diacylglycerol cysteine lipid modification.

Belongs to the BMP lipoprotein family. As to quaternary structure, monomer.

The protein localises to the cell inner membrane. In terms of biological role, may be part of an ABC-type nucleoside uptake system involved in the purine salvage pathway. The chain is Basic membrane protein C (bmpC) from Borreliella burgdorferi (strain N40) (Borrelia burgdorferi).